The primary structure comprises 122 residues: Histone H2B type 2-K1 (122 aa).

A disordered region spans residues 1-30 (MSAEYGQRQQPGGRGGRSSGNKKSKKRCRR). A compositionally biased stretch (basic residues) spans 20–30 (GNKKSKKRCRR). At Lys31 the chain carries N6-(2-hydroxyisobutyryl)lysine; alternate. Lys31 is subject to N6-(beta-hydroxybutyryl)lysine; alternate. Lys31 carries the post-translational modification N6-crotonyllysine; alternate. N6-glutaryllysine; alternate is present on Lys31. Lys31 carries the N6-succinyllysine; alternate modification. Residue Lys31 forms a Glycyl lysine isopeptide (Lys-Gly) (interchain with G-Cter in ubiquitin); alternate linkage. Ser33 is modified (phosphoserine). N6-(2-hydroxyisobutyryl)lysine; alternate is present on residues Lys40, Lys43, and Lys54. An N6-glutaryllysine; alternate mark is found at Lys40 and Lys43. Residue Lys40 is modified to N6-lactoyllysine; alternate. At Lys43 the chain carries N6-methyllysine. Position 43 is an N6-methyllysine; alternate (Lys43). Lys54 is subject to N6,N6-dimethyllysine. Lys54 carries the N6,N6-dimethyllysine; alternate modification. At Arg76 the chain carries Dimethylated arginine. Ser81 is subject to Phosphoserine. 2 positions are modified to omega-N-methylarginine: Arg83 and Arg89. N6-(2-hydroxyisobutyryl)lysine; alternate is present on Lys105. Lys105 carries the post-translational modification N6-glutaryllysine; alternate. The residue at position 105 (Lys105) is an N6-lactoyllysine; alternate. N6-methyllysine is present on Lys105. The residue at position 105 (Lys105) is an N6-methyllysine; alternate. O-linked (GlcNAc) serine glycosylation is present at Ser109. Thr112 carries the post-translational modification Phosphothreonine. Lys113 and Lys117 each carry N6-(2-hydroxyisobutyryl)lysine; alternate. 2 positions are modified to N6-(beta-hydroxybutyryl)lysine; alternate: Lys113 and Lys117. An N6-glutaryllysine; alternate mark is found at Lys113 and Lys117. 2 positions are modified to N6-succinyllysine; alternate: Lys113 and Lys117. Lys113 bears the N6-lactoyllysine; alternate mark. An N6-malonyllysine; alternate modification is found at Lys113. Lys113 is subject to N6-methylated lysine; alternate. Lys117 participates in a covalent cross-link: Glycyl lysine isopeptide (Lys-Gly) (interchain with G-Cter in ubiquitin); alternate.

This sequence belongs to the histone H2B family. In terms of assembly, the nucleosome is a histone octamer containing two molecules each of H2A, H2B, H3 and H4 assembled in one H3-H4 heterotetramer and two H2A-H2B heterodimers. The octamer wraps approximately 147 bp of DNA.

The protein resides in the chromosome. Its subcellular location is the nucleus. In terms of biological role, core component of nucleosome. Nucleosomes wrap and compact DNA into chromatin, limiting DNA accessibility to the cellular machineries which require DNA as a template. Histones thereby play a central role in transcription regulation, DNA repair, DNA replication and chromosomal stability. DNA accessibility is regulated via a complex set of post-translational modifications of histones, also called histone code, and nucleosome remodeling. The protein is Histone H2B type 2-K1 of Homo sapiens (Human).